We begin with the raw amino-acid sequence, 345 residues long: Anthranilate phosphoribosyltransferase (345 aa).

5-phospho-alpha-D-ribose 1-diphosphate is bound by residues Gly80, 83 to 84 (GD), Thr88, 90 to 93 (NIST), 108 to 116 (KHGNRSVSS), and Ser120. Gly80 is an anthranilate binding site. Residue Ser92 coordinates Mg(2+). Asn111 is an anthranilate binding site. Arg166 is an anthranilate binding site. Positions 225 and 226 each coordinate Mg(2+).

Belongs to the anthranilate phosphoribosyltransferase family. Homodimer. Mg(2+) serves as cofactor.

It carries out the reaction N-(5-phospho-beta-D-ribosyl)anthranilate + diphosphate = 5-phospho-alpha-D-ribose 1-diphosphate + anthranilate. The protein operates within amino-acid biosynthesis; L-tryptophan biosynthesis; L-tryptophan from chorismate: step 2/5. In terms of biological role, catalyzes the transfer of the phosphoribosyl group of 5-phosphorylribose-1-pyrophosphate (PRPP) to anthranilate to yield N-(5'-phosphoribosyl)-anthranilate (PRA). The polypeptide is Anthranilate phosphoribosyltransferase (Pelotomaculum thermopropionicum (strain DSM 13744 / JCM 10971 / SI)).